We begin with the raw amino-acid sequence, 787 residues long: Integrin beta-6 (787 aa).

Residues methionine 1–glycine 21 form the signal peptide. A PSI domain is found at glycine 22 to glutamine 71. Residues glycine 22–proline 708 are Extracellular-facing. 19 disulfide bridges follow: cysteine 23–cysteine 41, cysteine 31–cysteine 454, cysteine 34–cysteine 59, cysteine 44–cysteine 70, cysteine 197–cysteine 204, cysteine 252–cysteine 293, cysteine 394–cysteine 406, cysteine 426–cysteine 452, cysteine 456–cysteine 476, cysteine 467–cysteine 479, cysteine 481–cysteine 490, cysteine 492–cysteine 519, cysteine 502–cysteine 517, cysteine 511–cysteine 522, cysteine 524–cysteine 537, cysteine 539–cysteine 560, cysteine 544–cysteine 558, cysteine 552–cysteine 563, and cysteine 565–cysteine 574. Asparagine 48 and asparagine 97 each carry an N-linked (GlcNAc...) asparagine glycan. The 241-residue stretch at tyrosine 131–leucine 371 folds into the VWFA domain. Residues aspartate 140, serine 142, and serine 144 each coordinate Mg(2+). Ca(2+)-binding residues include serine 144, aspartate 147, aspartate 148, and glutamate 179. Residues asparagine 235, aspartate 237, proline 239, and glutamate 240 each contribute to the Ca(2+) site. Position 240 (glutamate 240) interacts with Mg(2+). Asparagine 260 is a glycosylation site (N-linked (GlcNAc...) asparagine). Aspartate 271 and lysine 355 together coordinate Ca(2+). N-linked (GlcNAc...) asparagine glycosylation occurs at asparagine 387. Residue asparagine 418 is glycosylated (N-linked (GlcNAc...) asparagine). 4 consecutive I-EGF domains span residues cysteine 456 to glutamate 491, cysteine 492 to glutamine 538, cysteine 539 to asparagine 575, and cysteine 576 to glutamate 615. N-linked (GlcNAc...) asparagine glycans are attached at residues asparagine 463 and asparagine 471. A glycan (N-linked (GlcNAc...) asparagine) is linked at asparagine 541. N-linked (GlcNAc...) asparagine glycosylation is present at asparagine 575. Disulfide bonds link cysteine 576-cysteine 599, cysteine 583-cysteine 597, cysteine 591-cysteine 602, cysteine 604-cysteine 614, cysteine 617-cysteine 620, cysteine 624-cysteine 669, cysteine 630-cysteine 649, cysteine 633-cysteine 645, and cysteine 677-cysteine 701. The N-linked (GlcNAc...) asparagine glycan is linked to asparagine 695. A helical transmembrane segment spans residues methionine 709–tryptophan 729. Positions lysine 730–threonine 757 are interaction with HAX1. The Cytoplasmic segment spans residues lysine 730–glycine 787.

This sequence belongs to the integrin beta chain family. As to quaternary structure, heterodimer of an alpha and a beta subunit. Interacts with FLNB. Interacts with HAX1. ITGAV:ITGB6 interacts with FBN1. ITGAV:ITGB6 interacts with TGFB1.

The protein resides in the cell membrane. Its subcellular location is the cell junction. It localises to the focal adhesion. Its function is as follows. Integrin alpha-V:beta-6 (ITGAV:ITGB6) is a receptor for fibronectin and cytotactin. It recognizes the sequence R-G-D in its ligands. ITGAV:ITGB6 acts as a receptor for fibrillin-1 (FBN1) and mediates R-G-D-dependent cell adhesion to FBN1. Integrin alpha-V:beta-6 (ITGAV:ITGB6) mediates R-G-D-dependent release of transforming growth factor beta-1 (TGF-beta-1) from regulatory Latency-associated peptide (LAP), thereby playing a key role in TGF-beta-1 activation. This Rattus norvegicus (Rat) protein is Integrin beta-6 (Itgb6).